The chain runs to 394 residues: 8-amino-7-oxononanoate synthase (394 aa).

Arg21 is a binding site for substrate. 112–113 (GY) serves as a coordination point for pyridoxal 5'-phosphate. His137 contributes to the substrate binding site. Residues Ser183, His211, and Thr239 each contribute to the pyridoxal 5'-phosphate site. Lys242 carries the N6-(pyridoxal phosphate)lysine modification. Thr358 contributes to the substrate binding site.

The protein belongs to the class-II pyridoxal-phosphate-dependent aminotransferase family. BioF subfamily. Homodimer. It depends on pyridoxal 5'-phosphate as a cofactor.

The enzyme catalyses 6-carboxyhexanoyl-[ACP] + L-alanine + H(+) = (8S)-8-amino-7-oxononanoate + holo-[ACP] + CO2. Its pathway is cofactor biosynthesis; biotin biosynthesis. Its function is as follows. Catalyzes the decarboxylative condensation of pimeloyl-[acyl-carrier protein] and L-alanine to produce 8-amino-7-oxononanoate (AON), [acyl-carrier protein], and carbon dioxide. The sequence is that of 8-amino-7-oxononanoate synthase from Paraburkholderia phymatum (strain DSM 17167 / CIP 108236 / LMG 21445 / STM815) (Burkholderia phymatum).